We begin with the raw amino-acid sequence, 342 residues long: ATP-dependent (S)-NAD(P)H-hydrate dehydratase (342 aa).

Residues 11-337 (ILPALEKVVP…EYLGHRLFTF (327 aa)) form the YjeF C-terminal domain. (6S)-NADPHX-binding positions include Gly127 and 180-186 (NVMEHKR). ATP-binding positions include 229 to 233 (KGKTD) and 248 to 257 (GSPRRCGGQG). (6S)-NADPHX is bound at residue Asp258.

Belongs to the NnrD/CARKD family. Mg(2+) is required as a cofactor.

It carries out the reaction (6S)-NADHX + ATP = ADP + phosphate + NADH + H(+). The enzyme catalyses (6S)-NADPHX + ATP = ADP + phosphate + NADPH + H(+). In terms of biological role, catalyzes the dehydration of the S-form of NAD(P)HX at the expense of ATP, which is converted to ADP. Together with NAD(P)HX epimerase, which catalyzes the epimerization of the S- and R-forms, the enzyme allows the repair of both epimers of NAD(P)HX, a damaged form of NAD(P)H that is a result of enzymatic or heat-dependent hydration. This Physcomitrium patens (Spreading-leaved earth moss) protein is ATP-dependent (S)-NAD(P)H-hydrate dehydratase.